We begin with the raw amino-acid sequence, 685 residues long: DEAD-box ATP-dependent RNA helicase 7 (685 aa).

Residues 1 to 89 are disordered; that stretch reads MPSISMMSDA…SELVQADDLK (89 aa). 2 stretches are compositionally biased toward basic and acidic residues: residues 22 to 42 and 66 to 78; these read MKSE…SSSK and AVDL…KSDN. The short motif at 107–135 is the Q motif element; sequence NSLSNFRISKPLKDVLISKGIKALFPIQA. A Helicase ATP-binding domain is found at 138–320; that stretch reads FDNVIDGCDL…TRFLKSAKKT (183 aa). 151–158 contacts ATP; it reads ARTGQGKT. The short motif at 266-269 is the DEAD box element; it reads DEAD. The 143-residue stretch at 349-491 folds into the Helicase C-terminal domain; sequence DLIPDIIRCY…LSAPQPVDVA (143 aa).

This sequence belongs to the DEAD box helicase family. DDX21/DDX50 subfamily.

It is found in the nucleus. It carries out the reaction ATP + H2O = ADP + phosphate + H(+). The chain is DEAD-box ATP-dependent RNA helicase 7 (RH7) from Spinacia oleracea (Spinach).